An 84-amino-acid chain; its full sequence is Small nuclear ribonucleoprotein E (84 aa).

Residues 13–84 (INFIFKLLQQ…GDNITLIQAI (72 aa)) enclose the Sm domain.

It belongs to the snRNP Sm proteins family. In terms of assembly, component of the Sm core complex, present in spliceosomal snRNP U1, U2, U4/U6 and U5. The core complex contains smb1, smd1, smd2, smd3, sme1, smf1 and smg1 (Sm proteins B, D1, D2, D3, E, F and G, respectively), and is probably a heptameric ring structure.

It is found in the cytoplasm. The protein resides in the nucleus. In terms of biological role, involved in pre-mRNA splicing. Binds and is required for the stability of snRNA U1, U2, U4 and U5 which contain a highly conserved structural motif called the Sm binding site. Involved in cap modification. This is Small nuclear ribonucleoprotein E from Schizosaccharomyces pombe (strain 972 / ATCC 24843) (Fission yeast).